A 105-amino-acid polypeptide reads, in one-letter code: Putative thioredoxin-5 (105 aa).

Residues 1-104 enclose the Thioredoxin domain; sequence MYKEPKNESE…VALENMVKKL (104 aa). Residues cysteine 30 and cysteine 33 each act as nucleophile in the active site. Residues cysteine 30 and cysteine 33 are joined by a disulfide bond.

It belongs to the thioredoxin family.

Participates in various redox reactions through the reversible oxidation of its active center dithiol to a disulfide and catalyzes dithiol-disulfide exchange reactions. The polypeptide is Putative thioredoxin-5 (trxE) (Dictyostelium discoideum (Social amoeba)).